The primary structure comprises 73 residues: Salivary thrombin inhibitor XC-42 (73 aa).

The first 23 residues, 1–23 (MKLQFLFIFIAFCVMLFAQIATA), serve as a signal peptide directing secretion.

Interacts with human F2 (thrombin). As to expression, salivary gland (at protein level).

It localises to the secreted. Acts as a competitive inhibitor of host thrombin. This is Salivary thrombin inhibitor XC-42 from Xenopsylla cheopis (Oriental rat flea).